A 295-amino-acid polypeptide reads, in one-letter code: Chromatin modification-related protein YNG2 (295 aa).

The segment at 151 to 208 (NGTAGSGSSSGRKRPASSSSANGKGQKRKQQKKERSRSHQRAGTVSRDVSPNAGIGRD) is disordered. Low complexity predominate over residues 156–171 (SGSSSGRKRPASSSSA). Residues 175-190 (GQKRKQQKKERSRSHQ) show a composition bias toward basic residues. The segment at 233-282 (QLYCFCQRVSYGEMVACDGPNCKYEWFHYSCVNLTEPPKGQWYCPECRLE) adopts a PHD-type zinc-finger fold. Residues cysteine 236, cysteine 238, cysteine 249, cysteine 254, histidine 260, cysteine 263, cysteine 276, and cysteine 279 each contribute to the Zn(2+) site.

It belongs to the ING family. Interacts with H3K4me3 and to a lesser extent with H3K4me2. Component of the NuA4 histone acetyltransferase complex.

It is found in the nucleus. In terms of biological role, component of the NuA4 histone acetyltransferase complex which is involved in transcriptional activation of selected genes principally by acetylation of nucleosomal histone H4 and H2A. The NuA4 complex is also involved in DNA repair. Involved in cell cycle progression and meiosis. The chain is Chromatin modification-related protein YNG2 (YNG2) from Kluyveromyces lactis (strain ATCC 8585 / CBS 2359 / DSM 70799 / NBRC 1267 / NRRL Y-1140 / WM37) (Yeast).